The sequence spans 129 residues: MKRGGIVNAQLAGALARLGHTDTLVVCDAGLPIPHGPEVVDLAFRLGIPGFGPVLEGILEELVVEEAVAAREVEGANPDCHALLASRLPELKLVPHWELKLRAADARLVVRTGEATPYSNVILRCGVPF.

The active-site Proton donor is the histidine 20. Residues aspartate 28, histidine 96, and 118-120 each bind substrate; that span reads YSN.

It belongs to the RbsD / FucU family. RbsD subfamily. Homodecamer.

The protein localises to the cytoplasm. The catalysed reaction is beta-D-ribopyranose = beta-D-ribofuranose. Its pathway is carbohydrate metabolism; D-ribose degradation; D-ribose 5-phosphate from beta-D-ribopyranose: step 1/2. Functionally, catalyzes the interconversion of beta-pyran and beta-furan forms of D-ribose. The sequence is that of D-ribose pyranase 1 from Rubrobacter xylanophilus (strain DSM 9941 / JCM 11954 / NBRC 16129 / PRD-1).